We begin with the raw amino-acid sequence, 584 residues long: Interferon regulatory factor 2-binding protein 1 (584 aa).

Residues 59–120 (HVLPEGRSPG…RYDRATSSSR (62 aa)) form a disordered region. Serine 66 carries the phosphoserine modification. Residues 82–100 (STGSQGSQLPPPQAQAQPS) are compositionally biased toward low complexity. Serine 125 carries the phosphoserine modification. Arginine 177 bears the Omega-N-methylarginine mark. Serine 186 bears the Phosphoserine mark. A coiled-coil region spans residues 197 to 217 (EKEKQQRNADCLAELNEAMRG). Lysine 227 is covalently cross-linked (Glycyl lysine isopeptide (Lys-Gly) (interchain with G-Cter in SUMO2)). Disordered regions lie at residues 346 to 421 (PAEA…GVPS) and 433 to 495 (LGHS…GTGA). The segment covering 354-369 (YPEPAPAALCGPPPRA) has biased composition (pro residues). A phosphoserine mark is found at serine 371, serine 384, serine 421, and serine 436. Lysine 438 participates in a covalent cross-link: Glycyl lysine isopeptide (Lys-Gly) (interchain with G-Cter in SUMO2). Residues 449–458 (AGGASPAASS) are compositionally biased toward low complexity. Phosphoserine is present on residues serine 453 and serine 457. The segment at 503–550 (CTLCRERLEDTHFVQCPSVPGHKFCFPCSREFIKAQGPAGEVYCPSGD) adopts an RING-type; degenerate zinc-finger fold. The cys-rich stretch occupies residues 503 to 550 (CTLCRERLEDTHFVQCPSVPGHKFCFPCSREFIKAQGPAGEVYCPSGD).

This sequence belongs to the IRF2BP family. In terms of assembly, interacts with IRF2. Part of a corepressor complex containing IRF2 and IRF2BP2. Interacts with JDP2.

It is found in the nucleus. The enzyme catalyses S-ubiquitinyl-[E2 ubiquitin-conjugating enzyme]-L-cysteine + [acceptor protein]-L-lysine = [E2 ubiquitin-conjugating enzyme]-L-cysteine + N(6)-ubiquitinyl-[acceptor protein]-L-lysine.. In terms of biological role, acts as a transcriptional corepressor in a IRF2-dependent manner; this repression is not mediated by histone deacetylase activities. May act as an E3 ligase towards JDP2, enhancing its polyubiquitination. Represses ATF2-dependent transcriptional activation. The protein is Interferon regulatory factor 2-binding protein 1 (Irf2bp1) of Mus musculus (Mouse).